A 531-amino-acid chain; its full sequence is Peptide chain release factor 3 (531 aa).

The tr-type G domain occupies 10-278; the sequence is RRRRTFAIIS…SLIDWAPAPK (269 aa). Residues 19 to 26, 87 to 91, and 141 to 144 each bind GTP; these read SHPDAGKT, DTPGH, and NKYD.

This sequence belongs to the TRAFAC class translation factor GTPase superfamily. Classic translation factor GTPase family. PrfC subfamily.

It localises to the cytoplasm. In terms of biological role, increases the formation of ribosomal termination complexes and stimulates activities of RF-1 and RF-2. It binds guanine nucleotides and has strong preference for UGA stop codons. It may interact directly with the ribosome. The stimulation of RF-1 and RF-2 is significantly reduced by GTP and GDP, but not by GMP. The chain is Peptide chain release factor 3 from Neisseria gonorrhoeae (strain NCCP11945).